The following is a 408-amino-acid chain: Peptidase T (408 aa).

Histidine 78 is a Zn(2+) binding site. The active site involves aspartate 80. Residue aspartate 140 participates in Zn(2+) binding. Catalysis depends on glutamate 174, which acts as the Proton acceptor. Zn(2+)-binding residues include glutamate 175, aspartate 197, and histidine 379.

Belongs to the peptidase M20B family. Requires Zn(2+) as cofactor.

Its subcellular location is the cytoplasm. It carries out the reaction Release of the N-terminal residue from a tripeptide.. Its function is as follows. Cleaves the N-terminal amino acid of tripeptides. This Staphylococcus aureus (strain Mu3 / ATCC 700698) protein is Peptidase T.